We begin with the raw amino-acid sequence, 250 residues long: Ubiquinone/menaquinone biosynthesis C-methyltransferase UbiE (250 aa).

S-adenosyl-L-methionine contacts are provided by residues serine 73, aspartate 94, and 122–123; that span reads NA.

It belongs to the class I-like SAM-binding methyltransferase superfamily. MenG/UbiE family.

The enzyme catalyses a 2-demethylmenaquinol + S-adenosyl-L-methionine = a menaquinol + S-adenosyl-L-homocysteine + H(+). It catalyses the reaction a 2-methoxy-6-(all-trans-polyprenyl)benzene-1,4-diol + S-adenosyl-L-methionine = a 5-methoxy-2-methyl-3-(all-trans-polyprenyl)benzene-1,4-diol + S-adenosyl-L-homocysteine + H(+). It functions in the pathway quinol/quinone metabolism; menaquinone biosynthesis; menaquinol from 1,4-dihydroxy-2-naphthoate: step 2/2. The protein operates within cofactor biosynthesis; ubiquinone biosynthesis. Methyltransferase required for the conversion of demethylmenaquinol (DMKH2) to menaquinol (MKH2) and the conversion of 2-polyprenyl-6-methoxy-1,4-benzoquinol (DDMQH2) to 2-polyprenyl-3-methyl-6-methoxy-1,4-benzoquinol (DMQH2). The protein is Ubiquinone/menaquinone biosynthesis C-methyltransferase UbiE of Legionella pneumophila subsp. pneumophila (strain Philadelphia 1 / ATCC 33152 / DSM 7513).